A 617-amino-acid chain; its full sequence is Vacuolar protein sorting-associated protein 33B (617 aa).

An N-acetylalanine modification is found at alanine 2.

This sequence belongs to the STXBP/unc-18/SEC1 family. Interacts with RAB11A and VIPAS39. Interacts with RAB25. Associates with adapter protein complex 3 (AP-3), clathrin:AP-3 and clathrin:HGS complexes. As to quaternary structure, (Microbial infection) Interacts with M.tuberculosis PtpA. Phosphorylated on tyrosine residues. Post-translationally, (Microbial infection) Dephosphorylated by M.tuberculosis PtpA, which induces the reduction of host phagolysosome fusion in M.tuberculosis-infected macrophages. As to expression, ubiquitous; highly expressed in testis and low expression in the lung.

It localises to the late endosome membrane. Its subcellular location is the lysosome membrane. The protein localises to the early endosome. It is found in the cytoplasmic vesicle. The protein resides in the clathrin-coated vesicle. It localises to the recycling endosome. Its function is as follows. May play a role in vesicle-mediated protein trafficking to lysosomal compartments and in membrane docking/fusion reactions of late endosomes/lysosomes. Required for proper trafficking and targeting of the collagen-modifying enzyme lysyl hydroxylase 3 (LH3) to intracellular collagen. Mediates phagolysosomal fusion in macrophages. Proposed to be involved in endosomal maturation implicating VIPAS39. In epithelial cells, the VPS33B:VIPAS39 complex may play a role in the apical recycling pathway and in the maintenance of the apical-basolateral polarity. Seems to be involved in the sorting of specific cargos from the trans-Golgi network to alpha-granule-destined multivesicular bodies (MVBs) promoting MVBs maturation in megakaryocytes. This Homo sapiens (Human) protein is Vacuolar protein sorting-associated protein 33B (VPS33B).